The chain runs to 309 residues: Ribonuclease Z (309 aa).

The Zn(2+) site is built by His63, His65, Asp67, His68, His145, Asp216, and His274. Residue Asp67 is the Proton acceptor of the active site.

It belongs to the RNase Z family. As to quaternary structure, homodimer. Zn(2+) is required as a cofactor.

The catalysed reaction is Endonucleolytic cleavage of RNA, removing extra 3' nucleotides from tRNA precursor, generating 3' termini of tRNAs. A 3'-hydroxy group is left at the tRNA terminus and a 5'-phosphoryl group is left at the trailer molecule.. In terms of biological role, zinc phosphodiesterase, which displays some tRNA 3'-processing endonuclease activity. Probably involved in tRNA maturation, by removing a 3'-trailer from precursor tRNA. In Streptococcus pneumoniae serotype 2 (strain D39 / NCTC 7466), this protein is Ribonuclease Z.